The following is a 600-amino-acid chain: UvrABC system protein C (600 aa).

The region spanning 15 to 92 (DKPGCYLMKD…IKKYQPYYNV (78 aa)) is the GIY-YIG domain. Residues 197 to 232 (SQVKQDLTEKMTQASMNLEFERAAEFRDQLKYIEQT) enclose the UVR domain.

Belongs to the UvrC family. As to quaternary structure, interacts with UvrB in an incision complex.

The protein resides in the cytoplasm. In terms of biological role, the UvrABC repair system catalyzes the recognition and processing of DNA lesions. UvrC both incises the 5' and 3' sides of the lesion. The N-terminal half is responsible for the 3' incision and the C-terminal half is responsible for the 5' incision. The polypeptide is UvrABC system protein C (Lactobacillus gasseri (strain ATCC 33323 / DSM 20243 / BCRC 14619 / CIP 102991 / JCM 1131 / KCTC 3163 / NCIMB 11718 / NCTC 13722 / AM63)).